Reading from the N-terminus, the 364-residue chain is GTPase Obg (364 aa).

Residues 1-159 (MKFVDEAYID…KSLKLELKVL (159 aa)) form the Obg domain. In terms of domain architecture, OBG-type G spans 160 to 334 (ADVGLLGMPN…LVKTIYQHVK (175 aa)). GTP contacts are provided by residues 166-173 (GMPNAGKS), 191-195 (FTTLH), 213-216 (DLPG), 284-287 (NKLD), and 315-317 (SAL). Residues serine 173 and threonine 193 each contribute to the Mg(2+) site. The segment at 337–364 (QKSEQPEEEVDPRFIELPPEPAKPASSD) is disordered.

It belongs to the TRAFAC class OBG-HflX-like GTPase superfamily. OBG GTPase family. As to quaternary structure, monomer. The cofactor is Mg(2+).

The protein resides in the cytoplasm. Functionally, an essential GTPase which binds GTP, GDP and possibly (p)ppGpp with moderate affinity, with high nucleotide exchange rates and a fairly low GTP hydrolysis rate. Plays a role in control of the cell cycle, stress response, ribosome biogenesis and in those bacteria that undergo differentiation, in morphogenesis control. The chain is GTPase Obg from Polaromonas naphthalenivorans (strain CJ2).